Reading from the N-terminus, the 730-residue chain is MTTAVTQATIDGFFDASNGDPFATLGMHETEQGIEIRTLLPDANRMVVIERESGKEITELDCVDERGFFVGVIPNCRQFFAYQLQVFWGNEAQIIEDPYRFHPMIDDLEQWLLSEGSMLRPYEVLGAHFMECDGVSGVNFRLWAPNARRVSIVGDFNYWDGRRHPMRFHPKSGVWELFLPKASLGQLYKFELIDCYGNLRLKADPYAFSSQLRPDTASQISALPNVVEMTEQRRQANQANQPISIYEVHLGSWRRNLENNFWLDYDQIADELIPYVKEMGFTHIEFLPLSEFPFDGSWGYQPLGLYSPTSRFGSPEAFRRLVKRAHEAGINVILDWVPGHFPSDTHGLVAFDGTALYEHEDPREGYHQDWNTLIYNYGRNEVKNFLSSNALYWLERFGVDGIRMDAVASMIYRDYSRAEGEWIPNQYGGRENLEAIEFLKHTNWKIHSEMAGAISIAEESTSFAGVTHPSEDGGLGFNFKWNMGWMNDTLAYMKLDPIYRQYHHNKMTFGMVYQYSENFVLPLSHDEVVHGKYSLLGKMPGDTWQKFANLRAYYGYMWGYPGKKLLFMGNEFAQGREWNYEESLDWFLLDENIGGGWHKGVLKLVKDLNQIYQKNRPLFELDNSPEGFDWLVVDDAANSVFAFERRSSNGERIIVVSNFTPVPRHNYRIGVNVAGKYEEILNTDSMYYEGSNVGNFGCVASEKIESHGRENSISVSIPPLATVYLRLKAK.

Aspartate 405 functions as the Nucleophile in the catalytic mechanism. Glutamate 458 serves as the catalytic Proton donor.

This sequence belongs to the glycosyl hydrolase 13 family. GlgB subfamily. As to quaternary structure, monomer.

The enzyme catalyses Transfers a segment of a (1-&gt;4)-alpha-D-glucan chain to a primary hydroxy group in a similar glucan chain.. Its pathway is glycan biosynthesis; glycogen biosynthesis. In terms of biological role, catalyzes the formation of the alpha-1,6-glucosidic linkages in glycogen by scission of a 1,4-alpha-linked oligosaccharide from growing alpha-1,4-glucan chains and the subsequent attachment of the oligosaccharide to the alpha-1,6 position. The polypeptide is 1,4-alpha-glucan branching enzyme GlgB (Haemophilus influenzae (strain 86-028NP)).